Reading from the N-terminus, the 429-residue chain is 3-phosphoshikimate 1-carboxyvinyltransferase (429 aa).

Positions 22, 23, and 27 each coordinate 3-phosphoshikimate. Phosphoenolpyruvate is bound at residue Lys22. Phosphoenolpyruvate is bound by residues Gly94 and Arg122. The 3-phosphoshikimate site is built by Ser167, Gln169, Asp315, and Lys342. Residue Gln169 participates in phosphoenolpyruvate binding. The Proton acceptor role is filled by Asp315. Phosphoenolpyruvate-binding residues include Arg346 and Arg388.

The protein belongs to the EPSP synthase family. In terms of assembly, monomer.

Its subcellular location is the cytoplasm. It catalyses the reaction 3-phosphoshikimate + phosphoenolpyruvate = 5-O-(1-carboxyvinyl)-3-phosphoshikimate + phosphate. It functions in the pathway metabolic intermediate biosynthesis; chorismate biosynthesis; chorismate from D-erythrose 4-phosphate and phosphoenolpyruvate: step 6/7. Its function is as follows. Catalyzes the transfer of the enolpyruvyl moiety of phosphoenolpyruvate (PEP) to the 5-hydroxyl of shikimate-3-phosphate (S3P) to produce enolpyruvyl shikimate-3-phosphate and inorganic phosphate. This is 3-phosphoshikimate 1-carboxyvinyltransferase from Geobacter sp. (strain M21).